Here is a 163-residue protein sequence, read N- to C-terminus: Nucleotide-binding protein YajQ (163 aa).

Belongs to the YajQ family.

Functionally, nucleotide-binding protein. This chain is Nucleotide-binding protein YajQ, found in Escherichia coli (strain K12 / DH10B).